The primary structure comprises 498 residues: Pyridine nucleotide-disulfide oxidoreductase domain-containing protein 1 (498 aa).

An N-acetylmethionine modification is found at Met-1.

The protein belongs to the class-I pyridine nucleotide-disulfide oxidoreductase family. PYROXD1 subfamily. FAD serves as cofactor.

It is found in the nucleus. Its subcellular location is the cytoplasm. The protein localises to the myofibril. It localises to the sarcomere. Its function is as follows. Probable FAD-dependent oxidoreductase; involved in the cellular oxidative stress response. Required for normal sarcomere structure and muscle fiber integrity. The chain is Pyridine nucleotide-disulfide oxidoreductase domain-containing protein 1 (Pyroxd1) from Rattus norvegicus (Rat).